We begin with the raw amino-acid sequence, 384 residues long: Spermidine/putrescine import ATP-binding protein PotA (384 aa).

The region spanning 6-238 is the ABC transporter domain; the sequence is ITFNNVSKTF…PINHFVANFI (233 aa). An ATP-binding site is contributed by 40–47; the sequence is GASGSGKS.

It belongs to the ABC transporter superfamily. Spermidine/putrescine importer (TC 3.A.1.11.1) family. As to quaternary structure, the complex is composed of two ATP-binding proteins (PotA), two transmembrane proteins (PotB and PotC) and a solute-binding protein (PotD).

The protein resides in the cell membrane. The enzyme catalyses ATP + H2O + polyamine-[polyamine-binding protein]Side 1 = ADP + phosphate + polyamineSide 2 + [polyamine-binding protein]Side 1.. Its function is as follows. Part of the ABC transporter complex PotABCD involved in spermidine/putrescine import. Responsible for energy coupling to the transport system. The protein is Spermidine/putrescine import ATP-binding protein PotA of Streptococcus pyogenes serotype M12 (strain MGAS2096).